The following is a 374-amino-acid chain: tRNA (guanine(26)-N(2))-dimethyltransferase (374 aa).

One can recognise a Trm1 methyltransferase domain in the interval 1–367 (MILKEGEVVF…ATLKNVIEAI (367 aa)). Residues R34, R66, D86, D113, and A114 each contribute to the S-adenosyl-L-methionine site.

Belongs to the class I-like SAM-binding methyltransferase superfamily. Trm1 family.

It catalyses the reaction guanosine(26) in tRNA + 2 S-adenosyl-L-methionine = N(2)-dimethylguanosine(26) in tRNA + 2 S-adenosyl-L-homocysteine + 2 H(+). Its function is as follows. Dimethylates a single guanine residue at position 26 of a number of tRNAs using S-adenosyl-L-methionine as donor of the methyl groups. In Methanocaldococcus jannaschii (strain ATCC 43067 / DSM 2661 / JAL-1 / JCM 10045 / NBRC 100440) (Methanococcus jannaschii), this protein is tRNA (guanine(26)-N(2))-dimethyltransferase.